Consider the following 455-residue polypeptide: GTPase Der (455 aa).

2 consecutive EngA-type G domains span residues 4-169 and 178-353; these read PVVA…PPKD and IQMS…EQHR. Residues 10-17, 57-61, 120-123, 184-191, 231-235, and 296-299 contribute to the GTP site; these read GRPNVGKS, DTGGL, NKCE, DTAGI, and NKWD. The KH-like domain maps to 354-439; that stretch reads RRVTTSVVNE…PLKLFWRGKQ (86 aa).

This sequence belongs to the TRAFAC class TrmE-Era-EngA-EngB-Septin-like GTPase superfamily. EngA (Der) GTPase family. Associates with the 50S ribosomal subunit.

Its function is as follows. GTPase that plays an essential role in the late steps of ribosome biogenesis. The polypeptide is GTPase Der (Synechococcus sp. (strain CC9902)).